The sequence spans 102 residues: Integration host factor subunit beta (102 aa).

This sequence belongs to the bacterial histone-like protein family. As to quaternary structure, heterodimer of an alpha and a beta chain.

In terms of biological role, this protein is one of the two subunits of integration host factor, a specific DNA-binding protein that functions in genetic recombination as well as in transcriptional and translational control. This chain is Integration host factor subunit beta, found in Rhodopseudomonas palustris (strain BisA53).